The primary structure comprises 503 residues: Beta-amylase Tri a 17 (503 aa).

3 residues coordinate substrate: aspartate 51, histidine 91, and aspartate 99. The active-site Proton donor is glutamate 184. 3 residues coordinate substrate: lysine 293, histidine 298, and threonine 340. Glutamate 378 functions as the Proton acceptor in the catalytic mechanism. Residues 379–380 (NA) and arginine 418 contribute to the substrate site.

Belongs to the glycosyl hydrolase 14 family.

It carries out the reaction Hydrolysis of (1-&gt;4)-alpha-D-glucosidic linkages in polysaccharides so as to remove successive maltose units from the non-reducing ends of the chains.. The chain is Beta-amylase Tri a 17 (BMY1) from Triticum aestivum (Wheat).